The primary structure comprises 432 residues: Amino-acid acetyltransferase (432 aa).

Residues glutamate 286–serine 425 form the N-acetyltransferase domain.

The protein belongs to the acetyltransferase family. ArgA subfamily.

It localises to the cytoplasm. It catalyses the reaction L-glutamate + acetyl-CoA = N-acetyl-L-glutamate + CoA + H(+). Its pathway is amino-acid biosynthesis; L-arginine biosynthesis; N(2)-acetyl-L-ornithine from L-glutamate: step 1/4. This chain is Amino-acid acetyltransferase, found in Pseudomonas aeruginosa (strain LESB58).